The sequence spans 346 residues: Phosphoribosylformylglycinamidine cyclo-ligase (346 aa).

This sequence belongs to the AIR synthase family.

The protein resides in the cytoplasm. The catalysed reaction is 2-formamido-N(1)-(5-O-phospho-beta-D-ribosyl)acetamidine + ATP = 5-amino-1-(5-phospho-beta-D-ribosyl)imidazole + ADP + phosphate + H(+). Its pathway is purine metabolism; IMP biosynthesis via de novo pathway; 5-amino-1-(5-phospho-D-ribosyl)imidazole from N(2)-formyl-N(1)-(5-phospho-D-ribosyl)glycinamide: step 2/2. This Geobacillus sp. (strain WCH70) protein is Phosphoribosylformylglycinamidine cyclo-ligase.